Reading from the N-terminus, the 278-residue chain is 1-acyl-sn-glycerol-3-phosphate acyltransferase beta (278 aa).

The signal sequence occupies residues 1–23 (MELWPCLAAALLLLLLLVQLSRA). Topologically, residues 24–29 (AEFYAK) are lumenal. A helical membrane pass occupies residues 30-50 (VALYCALCFTVSAVASLVCLL). Residues 51-121 (RHGGRTVENM…PERCVQIAKR (71 aa)) lie on the Cytoplasmic side of the membrane. Residues 98–103 (HQSILD) carry the HXXXXD motif motif. Residues 122-142 (ELLFLGPVGLIMYLGGVFFIN) traverse the membrane as a helical segment. At 143-278 (RQRSSTAMTV…TAGSGVQPAQ (136 aa)) the chain is on the lumenal side. An EGTR motif motif is present at residues 172–175 (EGTR).

This sequence belongs to the 1-acyl-sn-glycerol-3-phosphate acyltransferase family. As to expression, expressed predominantly in adipose tissue, pancreas and liver.

It is found in the endoplasmic reticulum membrane. It catalyses the reaction a 1-acyl-sn-glycero-3-phosphate + an acyl-CoA = a 1,2-diacyl-sn-glycero-3-phosphate + CoA. The enzyme catalyses 1-(9Z-octadecenoyl)-sn-glycero-3-phosphate + (9Z)-octadecenoyl-CoA = 1,2-di-(9Z-octadecenoyl)-sn-glycero-3-phosphate + CoA. It carries out the reaction 1-(9Z-octadecenoyl)-sn-glycero-3-phosphate + hexadecanoyl-CoA = 1-(9Z)-octadecenoyl-2-hexadecanoyl-sn-glycero-3-phosphate + CoA. The catalysed reaction is heptadecanoyl-CoA + 1-(9Z-octadecenoyl)-sn-glycero-3-phosphate = 1-(9Z)-octadecenoyl-2-heptadecanoyl-sn-glycero-3-phosphate + CoA. It catalyses the reaction 1-(9Z-octadecenoyl)-sn-glycero-3-phosphate + (9Z,12Z)-octadecadienoyl-CoA = 1-(9Z)-octadecenoyl-2-(9Z,12Z)-octadecadienoyl-sn-glycero-3-phosphate + CoA. The enzyme catalyses 1-(9Z-octadecenoyl)-sn-glycero-3-phosphate + tetradecanoyl-CoA = 1-(9Z)-octadecenoyl-2-tetradecanoyl-sn-glycero-3-phosphate + CoA. It carries out the reaction pentadecanoyl-CoA + 1-(9Z-octadecenoyl)-sn-glycero-3-phosphate = 1-(9Z)-octadecenoyl-2-pentadecanoyl-sn-glycero-3-phosphate + CoA. The catalysed reaction is 1-hexadecanoyl-sn-glycero-3-phosphate + (9Z)-octadecenoyl-CoA = 1-hexadecanoyl-2-(9Z-octadecenoyl)-sn-glycero-3-phosphate + CoA. It catalyses the reaction 1-tetradecanoyl-sn-glycerol 3-phosphate + (9Z)-octadecenoyl-CoA = 1-tetradecanoyl-2-(9Z)-octadecenoyl-sn-glycero-3-phosphate + CoA. The enzyme catalyses 1-(9Z,12Z,15Z)-octadecatrienoyl-sn-glycero-3-phosphate + (9Z)-octadecenoyl-CoA = 1-(9Z,12Z,15Z)-octadecatrienoyl-2-(9Z)-octadecenoyl-sn-glycero-3-phosphate + CoA. It carries out the reaction 1-(6Z,9Z,12Z-octadecatrienoyl)-sn-glycero-3-phosphate + (9Z)-octadecenoyl-CoA = (6Z,9Z,12Z)-octadecatrienoyl-2-(9Z)-octadecenoyl-sn-glycero-3-phosphate + CoA. The catalysed reaction is 1-eicosanoyl-sn-glycero-3-phosphate + (9Z)-octadecenoyl-CoA = 1-eicosanoyl-2-(9Z)-octadecenoyl-sn-glycero-3-phosphate + CoA. It catalyses the reaction 1-hexadecanoyl-sn-glycero-3-phosphate + octadecanoyl-CoA = 1-hexadecanoyl-2-octadecanoyl-sn-glycero-3-phosphate + CoA. The enzyme catalyses 1-hexadecanoyl-sn-glycero-3-phosphate + (5Z,8Z,11Z,14Z)-eicosatetraenoyl-CoA = 1-hexadecanoyl-2-(5Z,8Z,11Z,14Z-eicosatetraenoyl)-sn-glycero-3-phosphate + CoA. It carries out the reaction 1-hexadecanoyl-sn-glycero-3-phosphate + hexadecanoyl-CoA = 1,2-dihexadecanoyl-sn-glycero-3-phosphate + CoA. The catalysed reaction is 1-hexadecanoyl-sn-glycero-3-phosphate + tetradecanoyl-CoA = 1-hexadecanoyl-2-tetradecanoyl-sn-glycero-3-phosphate + CoA. It catalyses the reaction (11Z)-octadecenoyl-CoA + 1-(9Z-octadecenoyl)-sn-glycero-3-phosphate = 1-(9Z)-octadecenoyl-2-(11Z)-octadecenoyl-sn-glycero-3-phosphate + CoA. It functions in the pathway phospholipid metabolism; CDP-diacylglycerol biosynthesis; CDP-diacylglycerol from sn-glycerol 3-phosphate: step 2/3. Its function is as follows. Converts 1-acyl-sn-glycerol-3-phosphate (lysophosphatidic acid or LPA) into 1,2-diacyl-sn-glycerol-3-phosphate (phosphatidic acid or PA) by incorporating an acyl moiety at the sn-2 position of the glycerol backbone. The sequence is that of 1-acyl-sn-glycerol-3-phosphate acyltransferase beta (AGPAT2) from Homo sapiens (Human).